The primary structure comprises 194 residues: Xanthine phosphoribosyltransferase (194 aa).

Residues leucine 20 and asparagine 27 each contribute to the xanthine site. 128–132 (ANGEA) provides a ligand contact to 5-phospho-alpha-D-ribose 1-diphosphate. Lysine 156 is a binding site for xanthine.

It belongs to the purine/pyrimidine phosphoribosyltransferase family. Xpt subfamily. Homodimer.

It localises to the cytoplasm. It carries out the reaction XMP + diphosphate = xanthine + 5-phospho-alpha-D-ribose 1-diphosphate. It functions in the pathway purine metabolism; XMP biosynthesis via salvage pathway; XMP from xanthine: step 1/1. In terms of biological role, converts the preformed base xanthine, a product of nucleic acid breakdown, to xanthosine 5'-monophosphate (XMP), so it can be reused for RNA or DNA synthesis. The sequence is that of Xanthine phosphoribosyltransferase from Macrococcus caseolyticus (strain JCSC5402) (Macrococcoides caseolyticum).